An 808-amino-acid polypeptide reads, in one-letter code: Enhancer of polycomb homolog 2 (808 aa).

Residues K135, K195, and K324 each participate in a glycyl lysine isopeptide (Lys-Gly) (interchain with G-Cter in SUMO2) cross-link. The tract at residues 337-357 is disordered; sequence YPKKPKAEAGIAPQQPTPETL. A Glycyl lysine isopeptide (Lys-Gly) (interchain with G-Cter in SUMO2) cross-link involves residue K362. Disordered stretches follow at residues 371–397, 595–630, and 645–682; these read QSSD…PDGS, QRQQ…CMSK, and VSAP…LYST. Residues 595-614 are compositionally biased toward low complexity; the sequence is QRQQLAQLHQKQQSQHSSQQ. Composition is skewed to polar residues over residues 615-630 and 658-682; these read THPK…CMSK and EQNT…LYST. Residue S755 is modified to Phosphoserine.

The protein belongs to the enhancer of polycomb family.

It localises to the nucleus. Functionally, may play a role in transcription or DNA repair. This is Enhancer of polycomb homolog 2 (Epc2) from Mus musculus (Mouse).